Reading from the N-terminus, the 215-residue chain is Probable transaldolase (215 aa).

The active-site Schiff-base intermediate with substrate is the Lys83.

Belongs to the transaldolase family. Type 3B subfamily.

The protein resides in the cytoplasm. The enzyme catalyses D-sedoheptulose 7-phosphate + D-glyceraldehyde 3-phosphate = D-erythrose 4-phosphate + beta-D-fructose 6-phosphate. Its pathway is carbohydrate degradation; pentose phosphate pathway; D-glyceraldehyde 3-phosphate and beta-D-fructose 6-phosphate from D-ribose 5-phosphate and D-xylulose 5-phosphate (non-oxidative stage): step 2/3. Its function is as follows. Transaldolase is important for the balance of metabolites in the pentose-phosphate pathway. The protein is Probable transaldolase of Pelotomaculum thermopropionicum (strain DSM 13744 / JCM 10971 / SI).